A 428-amino-acid polypeptide reads, in one-letter code: D-amino acid dehydrogenase (428 aa).

3 to 17 (VVILGSGVVGVASAY) contacts FAD.

The protein belongs to the DadA oxidoreductase family. Requires FAD as cofactor.

It catalyses the reaction a D-alpha-amino acid + A + H2O = a 2-oxocarboxylate + AH2 + NH4(+). It participates in amino-acid degradation; D-alanine degradation; NH(3) and pyruvate from D-alanine: step 1/1. Functionally, oxidative deamination of D-amino acids. The polypeptide is D-amino acid dehydrogenase (Burkholderia multivorans (strain ATCC 17616 / 249)).